A 724-amino-acid polypeptide reads, in one-letter code: Protein arginine N-methyltransferase 1.6 (724 aa).

SAM-dependent MTase PRMT-type domains follow at residues 61–388 (NDQP…YNLK) and 395–721 (HERT…IVTH). Catalysis depends on residues E183 and E192.

Belongs to the class I-like SAM-binding methyltransferase superfamily. Protein arginine N-methyltransferase family. PRMT7 subfamily.

In terms of biological role, arginine methyltransferase that can both catalyze the formation of omega-N monomethylarginine (MMA) and symmetrical dimethylarginine (sDMA). This chain is Protein arginine N-methyltransferase 1.6 (PRMT16), found in Arabidopsis thaliana (Mouse-ear cress).